The sequence spans 504 residues: TGF-beta-activated kinase 1 and MAP3K7-binding protein 1 (504 aa).

The tract at residues 1–22 (MAAQRRSLLQSEQQPSWTDDLP) is disordered. Serine 7 is modified (phosphoserine). The span at 7-17 (SLLQSEQQPSW) shows a compositional bias: polar residues. In terms of domain architecture, PPM-type phosphatase spans 28-365 (GVGSASNRSY…EDMTLLVRNF (338 aa)). Position 378 is a phosphoserine (serine 378). An O-linked (GlcNAc) serine glycan is attached at serine 395. Serine 423 bears the Phosphoserine; by MAPK14 mark. The span at 430-439 (ATPTLTNQSP) shows a compositional bias: polar residues. A disordered region spans residues 430-478 (ATPTLTNQSPTLTLQSTNTHTQSSSSSSDGGLFRSRPAHSLPPGEDGRV). Threonine 431 carries the phosphothreonine; by MAPK14 modification. At serine 438 the chain carries Phosphoserine; by MAPK14. A compositionally biased stretch (low complexity) spans 440–457 (TLTLQSTNTHTQSSSSSS). The residue at position 442 (threonine 442) is a Phosphothreonine.

Interacts with XIAP and BIRC7. Interacts with TRAF6 and MAP3K7; during IL-1 signaling. Identified in the TRIKA2 complex composed of MAP3K7, TAB1 and TAB2. Interacts with TRAF6 and MAPK14; these interactions allow MAPK14 autophosphorylation. Interacts with STING1; interaction takes place following cGAMP activation and promotes TAB1 recruitment to the endoplasmic reticulum, triggering MAP3K7/TAK1 activation and STING1 phosphorylation. Phosphorylated at all three sites Ser-423, Thr-431 and Ser-438 by MAPK14 when cells were exposed to cellular stresses, or stimulated with TNF-alpha, IL1 or LPS. These phosphorylations inhibit TAK1 activation by a feedback control mechanism. Dephosphorylated by DUSP14 at Ser-438, leading to TAB1-MAP3K7/TAK1 complex inactivation in T-cells. Post-translationally, ubiquitinated by MAP3K1 with 'Lys-63'-linked polyubiquitin; leading to activation of TAK1 and of JNK and p38 MAP kinases following EGF and TGF-beta stimulation. Ubiquitinated by ITCH with 'Lys-48'-linked polyubiquitin; leading to proteasomal degradation. Ubiquitinated by RNF114 during maternal-to-zygotic transition; leading to degradation. In terms of processing, (Microbial infection) Deubiquitinated by Y.enterocolitica YopP. O-GlcNAcylated at Ser-395 by OGT is required for full MAP3K7/TAK1 activation upon stimulation with IL-1 or osmotic stress. Deglycosylated at Ser-395 by OGA. As to expression, ubiquitous.

Its subcellular location is the cytoplasm. It is found in the cytosol. It localises to the endoplasmic reticulum membrane. Its function is as follows. Key adapter protein that plays an essential role in JNK and NF-kappa-B activation and proinflammatory cytokines production in response to stimulation with TLRs and cytokines. Mechanistically, associates with the catalytic domain of MAP3K7/TAK1 to trigger MAP3K7/TAK1 autophosphorylation leading to its full activation. Similarly, associates with MAPK14 and triggers its autophosphorylation and subsequent activation. In turn, MAPK14 phosphorylates TAB1 and inhibits MAP3K7/TAK1 activation in a feedback control mechanism. Also plays a role in recruiting MAPK14 to the TAK1 complex for the phosphorylation of the TAB2 and TAB3 regulatory subunits. This is TGF-beta-activated kinase 1 and MAP3K7-binding protein 1 (TAB1) from Homo sapiens (Human).